The primary structure comprises 224 residues: UPF0758 protein VCM66_0205 (224 aa).

A disordered region spans residues 1-20; that stretch reads MSLKQLPTESMPREKLLQRG. Residues 102 to 224 enclose the MPN domain; the sequence is ALTSPQQTKL…VVSFAERGWI (123 aa). Positions 173, 175, and 186 each coordinate Zn(2+). Positions 173–186 match the JAMM motif motif; that stretch reads HNHPSGVAEPSQAD.

The protein belongs to the UPF0758 family.

This is UPF0758 protein VCM66_0205 from Vibrio cholerae serotype O1 (strain M66-2).